Consider the following 519-residue polypeptide: Circadian clock oscillator protein KaiC (519 aa).

In terms of domain architecture, KaiC 1 spans 1–247 (MTSAEMTSPN…TITDHGINIF (247 aa)). Positions 49, 50, 51, 52, 53, and 54 each coordinate ATP. Thr-53 is a Mg(2+) binding site. Residue Glu-77 is the Proton acceptor in CI (KaiC 1) of the active site. Ser-89 lines the ATP pocket. Residues 115–122 (QEVVGGFD) are B-loop, required to bind KaiB and SasA. Positions 224, 225, 226, 228, 230, 240, and 241 each coordinate ATP. Residues 248–260 (PLGAMRLTQRSSN) are linker. The KaiC 2 domain occupies 261–519 (VRVSSGVVRL…RGVQEKGPES (259 aa)). Residues Thr-290, Gly-291, Thr-292, Gly-293, Lys-294, Thr-295, and Leu-296 each contribute to the ATP site. Thr-295 contacts Mg(2+). Glu-318 contributes to the Mg(2+) binding site. The active-site Proton acceptor in CII (KaiC 2) is the Glu-318. Trp-331 serves as a coordination point for ATP. Ser-431 carries the phosphoserine; by autocatalysis modification. Residue Thr-432 is modified to Phosphothreonine; by autocatalysis. ATP is bound by residues Arg-451, Lys-457, Met-458, Arg-459, Ser-461, His-463, and Lys-465. Residues 488 to 497 (RIISGSPTRI) are A-loop, interacts with KaiA.

This sequence belongs to the KaiC family. As to quaternary structure, homohexamer resembling 2 stacked donuts with a central pore nearly blocked on one side; hexamerization is dependent on ATP-binding. Binds 12 ATP; 6 between each subunit in both layers. KaiB only binds to phospho-Ser-431 KaiC (not doubly phosphorylated KaiC). Complex formation between KaiB and KaiC is regulated by the phosphorylation state of KaiC and by an ATP hydrolysis-driven conformation change in the CI ring of KaiC; complex formation is slow. Slow complex formation is crucial for the timing of the circadian period. KaiB switches to a thioredoxin-like form called KaiB(fs) when bound to KaiC. The KaiABC complex composition changes during the circadian cycle to control KaiC phosphorylation. Complexes KaiC(6), KaiA(2-4):KaiC(6), KaiB(6):KaiC(6) and KaiC(6):KaiB(6):KaiA(12) are among the most important forms, many form cooperatively. Interacts directly with KaiB and SasA. The CI domain binds to KaiB and SasA; as they have a similar fold they compete for the same site on CI. CikA interacts with this protein in the clock complex. Binds to the C-terminus of KaiA via a coiled-coil structure. Forms KaiC(6):KaiB(1) and KaiC(6):KaiB(6) complexes. It depends on Mg(2+) as a cofactor. Post-translationally, has a 4 step phosphorylation cycle; the autokinase acts first on Thr-432, then Ser-431. When Ser-431 is modified KaiC switches to an autophosphatase mode, acting first on phospho-Thr-432 then phospho-Ser-431. Phosphorylated and dephosphorylated on serine/threonine residues by autocatalysis. Unphosphorylated, mono- and di-phosphorylated forms exist. The phosphorylated form correlates with clock speed. The presence of KaiA increases phosphorylation and stabilizes these forms. Phosphorylated on serine and threonine residues by autocatalysis. Has a 4 step phosphorylation cycle; the autokinase acts first on Thr-432, then Ser-431. When Ser-431 is modified KaiC switches to an autophosphatase mode, acting first on phospho-Thr-432 then phospho-Ser-431.

The enzyme catalyses L-seryl-[protein] + ATP = O-phospho-L-seryl-[protein] + ADP + H(+). It carries out the reaction L-threonyl-[protein] + ATP = O-phospho-L-threonyl-[protein] + ADP + H(+). It catalyses the reaction ATP + H2O = ADP + phosphate + H(+). With respect to regulation, interaction with KaiA stimulates autophosphorylation, KaiC interaction with KaiB sequesters KaiA, preventing it stimulating the KaiC kinase, leading to autodephosphorylation. A KaiA dimer is sufficient to enhance KaiC phosphorylation. Interaction of KaiA with the A-loop stimulates autokinase activity. Functionally, the KaiABC oscillator complex constitutes the main circadian regulator in cyanobacteria. Complex composition changes during the circadian cycle to control KaiC phosphorylation; KaiA stimulates KaiC autophosphorylation, while KaiB sequesters KaiA, leading to KaiC autodephosphorylation. The Kai complex controls chromosome condensation, leading to a transcription accessible chromosome during the first half of the circadian cycle and a compact, less transcription-accessible chromosome during the latter half. Clock output pathways impact the RpaA transcriptional regulator. Circadian oscillations can be generated in vitro by incubating KaiA, KaiB and KaiC with 1 mM ATP. The cycle is self-sustainable for at least 3 cycles and resistant to temperature changes. Mutations in KaiC alone prolong or reduce the circadian rhythm. A very robust clock is reconstituted with KaiA, KaiB, KaiC, SasA, CikA and RpaA; output is measured by transcription from an appropriate reporter. Its function is as follows. The level of KaiC phosphorylation and KaiC ATPase activity represent the key features of the biochemical oscillator. KaiA homodimer binding to the KaiC CII domain stimulates KaiC's ATPase activity and forms KaiA(2-4):KaiC(6) complexes, which stimulate KaiC autophosphorylation first on Thr-432 then Ser-431. Phospho-Ser-431-KaiC accumulation triggers binding of KaiB to CI to form the KaiB(6):KaiC(6) complex, leading to changes in the output regulators CikA and SasA. KaiB(6):KaiC(6) formation exposes a site for KaiA binding that sequesters KaiA from the CII domain, making the KaiC(6):KaiB(6):KaiA(12) complex that results in KaiC autodephosphorylation. Complete dephosphorylation of KaiC leads to dissociation of KaiA(2):KaiB(1), completing 1 cycle of the Kai oscillator. Has a weak, temperature-independent ATPase activity (about 15 molecules of ATP per day); the addition of KaiA and KaiB increases activity slightly and makes the activity oscillate with a circadian period in vitro for over 60 hours. ATPase activity defines the circadian period. The phosphorylation state of KaiC modulates its ATPase activity and effects KaiB binding. In terms of biological role, there are several clock output pathways; SasA/RpaA, CikA/RpaA and LabA. KaiC enhances the autophosphorylation activity of SasA, which then transfers its phosphate group to RpaA to activate it. Phosphotransfer is maximal when KaiC phosphorylation is active during the circadian cycle. KaiB and KaiC together enhance the phosphatase activity of CikA on phospho-RpaA. Functionally, kaiC is important for metabolic partitioning during the dark to light shift, modulating the balance between the Calvin cycle and oxidative pentose phosphate pathway under natural growth conditions. The chain is Circadian clock oscillator protein KaiC from Synechococcus elongatus (strain ATCC 33912 / PCC 7942 / FACHB-805) (Anacystis nidulans R2).